The sequence spans 474 residues: Transcription factor SOX-4 (474 aa).

A compositionally biased stretch (polar residues) spans 1-10; that stretch reads MVQQTNNAEN. Positions 1-58 are disordered; the sequence is MVQQTNNAENTEALLAGESSDSGAGLELGIASSPTPGSTASTGGKADDPSWCKTPSGH. The span at 31–44 shows a compositional bias: low complexity; it reads ASSPTPGSTASTGG. Positions 59–127 form a DNA-binding region, HMG box; it reads IKRPMNAFMV…KHMADYPDYK (69 aa). Lys-95 carries the N6-acetyllysine modification. 3 disordered regions span residues 128–228, 262–286, and 302–416; these read YRPR…GGGK, ARTP…APGK, and LGTS…NFES. The span at 138-149 shows a compositional bias: low complexity; the sequence is NANSSSSAAASS. Residues 158 to 189 show a composition bias toward gly residues; the sequence is VGGSGGGGHGGGGGGGSSNAGGGGGGASGGGA. 4 stretches are compositionally biased toward low complexity: residues 266 to 283, 304 to 320, 336 to 354, and 366 to 396; these read SASA…ALAA, TSSS…DPSD, APSL…AGRS, and AASP…GSSS. Over residues 397–406 the composition is skewed to acidic residues; the sequence is SDDEFEDDLL. The span at 407 to 416 shows a compositional bias: low complexity; the sequence is DLNPSSNFES. The 9aaTAD motif lies at 426–434; the sequence is SALDRDLDF.

Interacts with UBE2I. Interacts with HDAC1; interaction inhibits the transcriptional activator activity. In terms of processing, acetylation at Lys-95 by KAT5 promotes the transcription activator activity and is required during myoblast differentiation. Acetylation by KAT5 abolishes the interaction between SOX4 and HDAC1 and switches SOX4 into a transcriptional activator. As to expression, testis, brain, and heart.

The protein resides in the nucleus. Its function is as follows. Transcriptional activator that binds with high affinity to the T-cell enhancer motif 5'-AACAAAG-3' motif. Required for IL17A-producing Vgamma2-positive gamma-delta T-cell maturation and development, via binding to regulator loci of RORC to modulate expression. Involved in skeletal myoblast differentiation by promoting gene expression of CALD1. This chain is Transcription factor SOX-4, found in Homo sapiens (Human).